Here is a 176-residue protein sequence, read N- to C-terminus: ATP synthase subunit b, chloroplastic (176 aa).

Residues 27-49 traverse the membrane as a helical segment; sequence ILNLAAVFALLAYVGTDFVSSLL.

This sequence belongs to the ATPase B chain family. As to quaternary structure, F-type ATPases have 2 components, F(1) - the catalytic core - and F(0) - the membrane proton channel. F(1) has five subunits: alpha(3), beta(3), gamma(1), delta(1), epsilon(1). F(0) has four main subunits: a(1), b(1), b'(1) and c(10-14). The alpha and beta chains form an alternating ring which encloses part of the gamma chain. F(1) is attached to F(0) by a central stalk formed by the gamma and epsilon chains, while a peripheral stalk is formed by the delta, b and b' chains.

It is found in the plastid. The protein resides in the chloroplast thylakoid membrane. Functionally, f(1)F(0) ATP synthase produces ATP from ADP in the presence of a proton or sodium gradient. F-type ATPases consist of two structural domains, F(1) containing the extramembraneous catalytic core and F(0) containing the membrane proton channel, linked together by a central stalk and a peripheral stalk. During catalysis, ATP synthesis in the catalytic domain of F(1) is coupled via a rotary mechanism of the central stalk subunits to proton translocation. Its function is as follows. Component of the F(0) channel, it forms part of the peripheral stalk, linking F(1) to F(0). This chain is ATP synthase subunit b, chloroplastic, found in Nephroselmis olivacea (Green alga).